The chain runs to 118 residues: Large ribosomal subunit protein uL18 (118 aa).

Belongs to the universal ribosomal protein uL18 family. As to quaternary structure, part of the 50S ribosomal subunit; part of the 5S rRNA/L5/L18/L25 subcomplex. Contacts the 5S and 23S rRNAs.

In terms of biological role, this is one of the proteins that bind and probably mediate the attachment of the 5S RNA into the large ribosomal subunit, where it forms part of the central protuberance. The sequence is that of Large ribosomal subunit protein uL18 from Myxococcus xanthus (strain DK1622).